We begin with the raw amino-acid sequence, 354 residues long: Probable dual-specificity RNA methyltransferase RlmN (354 aa).

Glu94 serves as the catalytic Proton acceptor. Positions 103–332 constitute a Radical SAM core domain; that stretch reads GRRRNTACLS…QEAGLEAAIR (230 aa). Cys110 and Cys343 form a disulfide bridge. Positions 117, 121, and 124 each coordinate [4Fe-4S] cluster. S-adenosyl-L-methionine contacts are provided by residues 169-170, Ser201, 224-226, and Asn300; these read GE and SLH. The active-site S-methylcysteine intermediate is Cys343.

The protein belongs to the radical SAM superfamily. RlmN family. The cofactor is [4Fe-4S] cluster.

It is found in the cytoplasm. It carries out the reaction adenosine(2503) in 23S rRNA + 2 reduced [2Fe-2S]-[ferredoxin] + 2 S-adenosyl-L-methionine = 2-methyladenosine(2503) in 23S rRNA + 5'-deoxyadenosine + L-methionine + 2 oxidized [2Fe-2S]-[ferredoxin] + S-adenosyl-L-homocysteine. The catalysed reaction is adenosine(37) in tRNA + 2 reduced [2Fe-2S]-[ferredoxin] + 2 S-adenosyl-L-methionine = 2-methyladenosine(37) in tRNA + 5'-deoxyadenosine + L-methionine + 2 oxidized [2Fe-2S]-[ferredoxin] + S-adenosyl-L-homocysteine. Functionally, specifically methylates position 2 of adenine 2503 in 23S rRNA and position 2 of adenine 37 in tRNAs. The polypeptide is Probable dual-specificity RNA methyltransferase RlmN (Moorella thermoacetica (strain ATCC 39073 / JCM 9320)).